Here is a 40-residue protein sequence, read N- to C-terminus: Light-harvesting protein B800/830/1020 beta-1 chain (40 aa).

The Cytoplasmic segment spans residues 1–20; sequence ANDIRPLRDFEDEEAQEFHQ. Residues His-19 and His-37 each coordinate a bacteriochlorophyll. The helical transmembrane segment at 21–40 threads the bilayer; it reads AAVQAFFLYVAVAFVAHLPV.

This sequence belongs to the antenna complex beta subunit family. As to quaternary structure, the core complex is formed by different alpha and beta chains, binding bacteriochlorophyll molecules, and arranged most probably in tetrameric structures disposed around the reaction center. The non-pigmented gamma chains may constitute additional components.

It is found in the cell inner membrane. In terms of biological role, antenna complexes are light-harvesting systems, which transfer the excitation energy to the reaction centers. The sequence is that of Light-harvesting protein B800/830/1020 beta-1 chain from Halorhodospira halochloris (Ectothiorhodospira halochloris).